We begin with the raw amino-acid sequence, 630 residues long: MLKSLKSRRLILKRLVTLLLSLFFSYLIFSASRNVTSSNKLNNHASERTAVESSAFNWIEKRQHQVRSENLMNRLSAYFLPFLSRSSHKERVLLRQLGNNEIAKSDKCRYIFEVLYKIDPDWDNAQTAKFYNVDGVDNTLASLLGERLRSYDYCFLSGQLDPTAIFANSTVNPHDLQNRMFPFLKKINEESKTVMWPIITDMTTGEAVPAPEVDMESSNFNGNFWSNWNRLSKGRGFVLTIAEKDVPLFLKQLKVMEFSKNELPFQIVSTGNELSAESIAKISETAKETEQRVYLVDCSTVLDTNFANTYISFFQNKWVATLFNTFEEYILLDADVVPFVGSDYFFDSPSYRESGILLFKDRVMENEQTFQYCIEMLNEVEPSAQERRFIGSRLVFDSSLPFSSETSEEASVYYNFFKKLRLHHVDSGLVVVNKLEKLNGLLMSFMLNLDGKLQRCVYGDKEIFWLGQLYAGQDYSINPVDGSIIGPVNEEPENDDGHKSGMYYICSTQIAHSDSKNRLLWVNGGLKTCKISNSAEDDFGREPEYFKSRYGDISKLKRIYDASLNVEGLIVPDVSVHPWMQIKECSNYMYCAYATGDGHTNSELDEGRLITFTEKELRYINDISRTWNAN.

Residues 1–14 lie on the Cytoplasmic side of the membrane; it reads MLKSLKSRRLILKR. The chain crosses the membrane as a helical; Signal-anchor for type II membrane protein span at residues 15–31; the sequence is LVTLLLSLFFSYLIFSA. Residues 32–630 are Lumenal-facing; the sequence is SRNVTSSNKL…NDISRTWNAN (599 aa). Asn34 and Asn168 each carry an N-linked (GlcNAc...) asparagine glycan.

Belongs to the MNN1/MNT family.

The protein localises to the golgi apparatus membrane. Its pathway is protein modification; protein glycosylation. In terms of biological role, mannosyltransferase involved in adding the 4th and 5th mannose residues of O-linked glycans. In Saccharomyces cerevisiae (strain ATCC 204508 / S288c) (Baker's yeast), this protein is Alpha-1,3-mannosyltransferase MNT3 (MNT3).